A 986-amino-acid polypeptide reads, in one-letter code: Anoctamin-1 (986 aa).

Residues methionine 1–alanine 333 lie on the Cytoplasmic side of the membrane. Residues leucine 79–glutamate 121 are disordered. 2 positions are modified to phosphoserine: serine 107 and serine 196. A helical transmembrane segment spans residues tryptophan 334 to leucine 354. The Extracellular portion of the chain corresponds to tyrosine 355 to asparagine 406. 4 cysteine pairs are disulfide-bonded: cysteine 370–cysteine 395, cysteine 379–cysteine 862, cysteine 382–cysteine 386, and cysteine 651–cysteine 656. A helical transmembrane segment spans residues proline 407–tryptophan 427. Glutamate 425 lines the Ca(2+) pocket. Residues lysine 428–asparagine 519 lie on the Cytoplasmic side of the membrane. Residues leucine 520–tyrosine 540 traverse the membrane as a helical segment. Residues arginine 541–alanine 568 lie on the Extracellular side of the membrane. Residues valine 569–tryptophan 589 form a helical membrane-spanning segment. The Cytoplasmic portion of the chain corresponds to leucine 590–isoleucine 607. The helical transmembrane segment at phenylalanine 608 to phenylalanine 628 threads the bilayer. Residues lysine 629–leucine 657 are Extracellular-facing. A helical transmembrane segment spans residues methionine 658–leucine 678. 6 residues coordinate Ca(2+): asparagine 677, glutamate 680, glutamate 728, glutamate 731, glutamate 760, and aspartate 764. The Cytoplasmic portion of the chain corresponds to phenylalanine 679–leucine 725. Transmembrane regions (helical) follow at residues threonine 726 to phenylalanine 746 and proline 747 to lysine 767. Topologically, residues phenylalanine 768–glycine 784 are cytoplasmic. A helical transmembrane segment spans residues isoleucine 785–isoleucine 805. Residues serine 806–alanine 892 are Extracellular-facing. Asparagine 832 is a glycosylation site (N-linked (GlcNAc...) asparagine). A helical membrane pass occupies residues phenylalanine 893–proline 913. Residues aspartate 909 and aspartate 914 each contribute to the Ca(2+) site. At aspartate 914–leucine 986 the chain is on the cytoplasmic side. Residues lysine 951–cysteine 960 show a composition bias toward basic and acidic residues. Residues lysine 951 to leucine 986 are disordered.

Belongs to the anoctamin family. As to quaternary structure, homodimer. Interacts with CFTR. Interacts with TRPV4. Expressed in nasal epithelial cells (at protein level). In the kidney, expressed in the collecting duct (at protein level). Broadly expressed with higher levels in liver, skeletal muscle and gastrointestinal muscles. Expressed in eccrine sweat glands.

It is found in the apical cell membrane. The protein resides in the presynapse. The catalysed reaction is chloride(in) = chloride(out). With respect to regulation, ATP and calmodulin are essential for its activation. Channel activity is inhibited by CFTR protein and by chloride inhibitors such as niflumic acid (NFA) and 4,4'-diisothiocyanatostilbene-2,2'-disulfonic acid (DIDS). Activated by heat with activation seen at temperatures above 44 degrees Celsius. Activated by BDNF in radial glial cells. Functionally, calcium-activated chloride channel (CaCC). Plays a role in transepithelial anion transport and smooth muscle contraction. Required for the normal functioning of the interstitial cells of Cajal (ICCs) which generate electrical pacemaker activity in gastrointestinal smooth muscles. Acts as a major contributor to basal and stimulated chloride conductance in airway epithelial cells and plays an important role in tracheal cartilage development. Required for CFTR activation by enhancing endoplasmic reticulum Ca(2+) store release and is also required for CFTR membrane expression. Required for basal and ATP-dependent mucus secretion in airways and intestine, probably by controlling exocytosis of mucus-filled granules by providing Ca(2+) to an apical signaling compartment. Contributes to airway mucus expression induced by interleukins IL3 and IL8 and by the asthma-associated protein CLCA1 and is required for expression of mucin MUC5AC. However, was shown in another study not to be required for MUC5AC expression. Plays a role in the propagation of Ca(2+) waves in Kolliker's organ in the cochlea and contributes to the refinement of auditory brainstem circuitries prior to hearing onset. In vomeronasal sensory neurons, modulates spontaneous firing patterns in the absence of stimuli as well as the firing pattern of pheromone-evoked activity. Responsible for calcium-activated chloride channel activity in type I taste cells of the vallate papillae. Acts as a heat sensor in nociceptive neurons. In dorsal root ganglion neurons, plays a role in mediating non-histaminergic Mas-related G-protein coupled receptor (MRGPR)-dependent itching, acting as a downstream effector of MRGPRs. In the developing brain, required for the Ca(2+)-dependent process extension of radial glial cells. Its function is as follows. Calcium-activated chloride channel (CaCC). Contributes to calcium-activated chloride secretion in human sweat gland epithelial cells. Shows increased basal chloride permeability and decreased Ca(2+)-induced chloride permeability. Calcium-activated chloride channel (CaCC). Shows increased sensitivity to intracellular Ca(2+). This Homo sapiens (Human) protein is Anoctamin-1 (ANO1).